Here is a 247-residue protein sequence, read N- to C-terminus: 2,3-bisphosphoglycerate-dependent phosphoglycerate mutase (247 aa).

Substrate-binding positions include 8 to 15 (RHGESQWN), 21 to 22 (TG), R60, 87 to 90 (ERHY), K98, 114 to 115 (RR), and 183 to 184 (GN). The active-site Tele-phosphohistidine intermediate is H9. E87 acts as the Proton donor/acceptor in catalysis.

This sequence belongs to the phosphoglycerate mutase family. BPG-dependent PGAM subfamily.

The enzyme catalyses (2R)-2-phosphoglycerate = (2R)-3-phosphoglycerate. Its pathway is carbohydrate degradation; glycolysis; pyruvate from D-glyceraldehyde 3-phosphate: step 3/5. In terms of biological role, catalyzes the interconversion of 2-phosphoglycerate and 3-phosphoglycerate. This Chlorobium limicola (strain DSM 245 / NBRC 103803 / 6330) protein is 2,3-bisphosphoglycerate-dependent phosphoglycerate mutase.